Here is a 155-residue protein sequence, read N- to C-terminus: 6,7-dimethyl-8-ribityllumazine synthase (155 aa).

5-amino-6-(D-ribitylamino)uracil contacts are provided by residues Phe-23, 57 to 59 (AFE), and 81 to 83 (AVI). 86–87 (ST) serves as a coordination point for (2S)-2-hydroxy-3-oxobutyl phosphate. The active-site Proton donor is the His-89. Residue Phe-114 coordinates 5-amino-6-(D-ribitylamino)uracil. A (2S)-2-hydroxy-3-oxobutyl phosphate-binding site is contributed by Arg-128.

This sequence belongs to the DMRL synthase family.

It carries out the reaction (2S)-2-hydroxy-3-oxobutyl phosphate + 5-amino-6-(D-ribitylamino)uracil = 6,7-dimethyl-8-(1-D-ribityl)lumazine + phosphate + 2 H2O + H(+). Its pathway is cofactor biosynthesis; riboflavin biosynthesis; riboflavin from 2-hydroxy-3-oxobutyl phosphate and 5-amino-6-(D-ribitylamino)uracil: step 1/2. Its function is as follows. Catalyzes the formation of 6,7-dimethyl-8-ribityllumazine by condensation of 5-amino-6-(D-ribitylamino)uracil with 3,4-dihydroxy-2-butanone 4-phosphate. This is the penultimate step in the biosynthesis of riboflavin. The sequence is that of 6,7-dimethyl-8-ribityllumazine synthase from Dehalococcoides mccartyi (strain ATCC BAA-2100 / JCM 16839 / KCTC 5957 / BAV1).